An 820-amino-acid polypeptide reads, in one-letter code: Phenylalanine--tRNA ligase beta subunit (820 aa).

The 113-residue stretch at 42–154 (KGGLEGLVIG…EDAVPGTLAK (113 aa)) folds into the tRNA-binding domain. In terms of domain architecture, B5 spans 413-489 (AQDFIVELTY…RIYGYNNVEI (77 aa)). Residues D467, D473, E476, and D477 each contribute to the Mg(2+) site. The region spanning 727-820 (SKFPAVKRDL…LEDKLGAKLR (94 aa)) is the FDX-ACB domain.

The protein belongs to the phenylalanyl-tRNA synthetase beta subunit family. Type 1 subfamily. As to quaternary structure, tetramer of two alpha and two beta subunits. Requires Mg(2+) as cofactor.

The protein localises to the cytoplasm. The enzyme catalyses tRNA(Phe) + L-phenylalanine + ATP = L-phenylalanyl-tRNA(Phe) + AMP + diphosphate + H(+). The polypeptide is Phenylalanine--tRNA ligase beta subunit (Bacteroides fragilis (strain YCH46)).